We begin with the raw amino-acid sequence, 270 residues long: Putative pyruvate, phosphate dikinase regulatory protein (270 aa).

148 to 155 (GVSRTSKT) serves as a coordination point for ADP.

Belongs to the pyruvate, phosphate/water dikinase regulatory protein family. PDRP subfamily.

It carries out the reaction N(tele)-phospho-L-histidyl/L-threonyl-[pyruvate, phosphate dikinase] + ADP = N(tele)-phospho-L-histidyl/O-phospho-L-threonyl-[pyruvate, phosphate dikinase] + AMP + H(+). The enzyme catalyses N(tele)-phospho-L-histidyl/O-phospho-L-threonyl-[pyruvate, phosphate dikinase] + phosphate + H(+) = N(tele)-phospho-L-histidyl/L-threonyl-[pyruvate, phosphate dikinase] + diphosphate. Functionally, bifunctional serine/threonine kinase and phosphorylase involved in the regulation of the pyruvate, phosphate dikinase (PPDK) by catalyzing its phosphorylation/dephosphorylation. The chain is Putative pyruvate, phosphate dikinase regulatory protein from Bacillus cytotoxicus (strain DSM 22905 / CIP 110041 / 391-98 / NVH 391-98).